Here is a 337-residue protein sequence, read N- to C-terminus: Alanine racemase (337 aa).

The Proton acceptor; specific for D-alanine role is filled by lysine 33. Lysine 33 carries the post-translational modification N6-(pyridoxal phosphate)lysine. Arginine 118 contributes to the substrate binding site. Catalysis depends on tyrosine 246, which acts as the Proton acceptor; specific for L-alanine. Substrate is bound at residue methionine 292.

This sequence belongs to the alanine racemase family. It depends on pyridoxal 5'-phosphate as a cofactor.

The enzyme catalyses L-alanine = D-alanine. It participates in amino-acid biosynthesis; D-alanine biosynthesis; D-alanine from L-alanine: step 1/1. Catalyzes the interconversion of L-alanine and D-alanine. May also act on other amino acids. The sequence is that of Alanine racemase (alr) from Campylobacter curvus (strain 525.92).